The primary structure comprises 169 residues: Probable actin-related protein 2/3 complex subunit 4 (169 aa).

It belongs to the ARPC4 family. Component of the Arp2/3 complex, at least composed of arx-1, arx-2, arx-4 and arx-6.

It is found in the cytoplasm. The protein localises to the cytoskeleton. Functions as actin-binding component of the Arp2/3 complex which is involved in regulation of actin polymerization and together with an activating nucleation-promoting factor (NPF) mediates the formation of branched actin networks. Seems to contact the mother actin filament. Plays a role in time-dependent memory loss and the retention of conditioned behavior over time. This chain is Probable actin-related protein 2/3 complex subunit 4, found in Caenorhabditis elegans.